Consider the following 361-residue polypeptide: Phosphoserine aminotransferase (361 aa).

R42 contributes to the L-glutamate binding site. Residues 76 to 77, W102, T153, D173, and Q196 each bind pyridoxal 5'-phosphate; that span reads AR. K197 carries the post-translational modification N6-(pyridoxal phosphate)lysine. Pyridoxal 5'-phosphate is bound at residue 238 to 239; the sequence is NT.

The protein belongs to the class-V pyridoxal-phosphate-dependent aminotransferase family. SerC subfamily. In terms of assembly, homodimer. It depends on pyridoxal 5'-phosphate as a cofactor.

The protein resides in the cytoplasm. The catalysed reaction is O-phospho-L-serine + 2-oxoglutarate = 3-phosphooxypyruvate + L-glutamate. It catalyses the reaction 4-(phosphooxy)-L-threonine + 2-oxoglutarate = (R)-3-hydroxy-2-oxo-4-phosphooxybutanoate + L-glutamate. It functions in the pathway amino-acid biosynthesis; L-serine biosynthesis; L-serine from 3-phospho-D-glycerate: step 2/3. Its pathway is cofactor biosynthesis; pyridoxine 5'-phosphate biosynthesis; pyridoxine 5'-phosphate from D-erythrose 4-phosphate: step 3/5. Its function is as follows. Catalyzes the reversible conversion of 3-phosphohydroxypyruvate to phosphoserine and of 3-hydroxy-2-oxo-4-phosphonooxybutanoate to phosphohydroxythreonine. The protein is Phosphoserine aminotransferase of Buchnera aphidicola subsp. Acyrthosiphon pisum (strain 5A).